The sequence spans 335 residues: Holliday junction branch migration complex subunit RuvB (335 aa).

Residues 1–183 are large ATPase domain (RuvB-L); that stretch reads MDERIISSET…FGVIDHLEFY (183 aa). ATP-binding positions include leucine 22, arginine 23, glycine 64, lysine 67, threonine 68, threonine 69, 130–132, arginine 173, tyrosine 183, and arginine 220; that span reads EDY. Threonine 68 provides a ligand contact to Mg(2+). The small ATPAse domain (RuvB-S) stretch occupies residues 184 to 254; sequence TEEQLTEIVL…LAKEALTLLQ (71 aa). Residues 257–335 form a head domain (RuvB-H) region; it reads PRGLDTIDQK…HLGISYEKEV (79 aa). DNA-binding residues include arginine 293, arginine 312, and arginine 317.

Belongs to the RuvB family. In terms of assembly, homohexamer. Forms an RuvA(8)-RuvB(12)-Holliday junction (HJ) complex. HJ DNA is sandwiched between 2 RuvA tetramers; dsDNA enters through RuvA and exits via RuvB. An RuvB hexamer assembles on each DNA strand where it exits the tetramer. Each RuvB hexamer is contacted by two RuvA subunits (via domain III) on 2 adjacent RuvB subunits; this complex drives branch migration. In the full resolvosome a probable DNA-RuvA(4)-RuvB(12)-RuvC(2) complex forms which resolves the HJ.

Its subcellular location is the cytoplasm. The catalysed reaction is ATP + H2O = ADP + phosphate + H(+). The RuvA-RuvB-RuvC complex processes Holliday junction (HJ) DNA during genetic recombination and DNA repair, while the RuvA-RuvB complex plays an important role in the rescue of blocked DNA replication forks via replication fork reversal (RFR). RuvA specifically binds to HJ cruciform DNA, conferring on it an open structure. The RuvB hexamer acts as an ATP-dependent pump, pulling dsDNA into and through the RuvAB complex. RuvB forms 2 homohexamers on either side of HJ DNA bound by 1 or 2 RuvA tetramers; 4 subunits per hexamer contact DNA at a time. Coordinated motions by a converter formed by DNA-disengaged RuvB subunits stimulates ATP hydrolysis and nucleotide exchange. Immobilization of the converter enables RuvB to convert the ATP-contained energy into a lever motion, pulling 2 nucleotides of DNA out of the RuvA tetramer per ATP hydrolyzed, thus driving DNA branch migration. The RuvB motors rotate together with the DNA substrate, which together with the progressing nucleotide cycle form the mechanistic basis for DNA recombination by continuous HJ branch migration. Branch migration allows RuvC to scan DNA until it finds its consensus sequence, where it cleaves and resolves cruciform DNA. The chain is Holliday junction branch migration complex subunit RuvB from Listeria monocytogenes serotype 4b (strain CLIP80459).